Reading from the N-terminus, the 152-residue chain is Transcriptional regulator MraZ (152 aa).

2 SpoVT-AbrB domains span residues 5 to 52 (ATLV…PLPE) and 81 to 124 (ASEC…DETT).

It belongs to the MraZ family. In terms of assembly, forms oligomers.

The protein localises to the cytoplasm. It localises to the nucleoid. In terms of biological role, negatively regulates its own expression and that of the subsequent genes in the proximal part of the division and cell wall (dcw) gene cluster. Acts by binding directly to DNA. May also regulate the expression of genes outside the dcw cluster. The polypeptide is Transcriptional regulator MraZ (Escherichia coli O127:H6 (strain E2348/69 / EPEC)).